The primary structure comprises 230 residues: Vacuole-localized protein 4 (230 aa).

The first 19 residues, 1–19, serve as a signal peptide directing secretion; it reads MRVSSAIFTIASGIAAVSA.

The protein resides in the vacuole. In terms of biological role, vacuolar protein required for aerial conidiation and conidial maturation. Also involved in blastospore production and cell cycle. Plays a vital role in the secretion of Pr1 proteases for cuticular penetration and hence contributes significantly to host infection and virulence. This Beauveria bassiana (strain ARSEF 2860) (White muscardine disease fungus) protein is Vacuole-localized protein 4.